Here is a 178-residue protein sequence, read N- to C-terminus: Large ribosomal subunit protein uL6 (178 aa).

Belongs to the universal ribosomal protein uL6 family. As to quaternary structure, part of the 50S ribosomal subunit.

This protein binds to the 23S rRNA, and is important in its secondary structure. It is located near the subunit interface in the base of the L7/L12 stalk, and near the tRNA binding site of the peptidyltransferase center. The chain is Large ribosomal subunit protein uL6 from Tropheryma whipplei (strain TW08/27) (Whipple's bacillus).